Reading from the N-terminus, the 606-residue chain is Elongation factor 4 (606 aa).

The region spanning 11–193 (DKIRNFSIVA…AIVTRLPPPK (183 aa)) is the tr-type G domain. Residues 23–28 (DHGKST) and 140–143 (NKVD) each bind GTP.

The protein belongs to the TRAFAC class translation factor GTPase superfamily. Classic translation factor GTPase family. LepA subfamily.

It is found in the cell inner membrane. The enzyme catalyses GTP + H2O = GDP + phosphate + H(+). Its function is as follows. Required for accurate and efficient protein synthesis under certain stress conditions. May act as a fidelity factor of the translation reaction, by catalyzing a one-codon backward translocation of tRNAs on improperly translocated ribosomes. Back-translocation proceeds from a post-translocation (POST) complex to a pre-translocation (PRE) complex, thus giving elongation factor G a second chance to translocate the tRNAs correctly. Binds to ribosomes in a GTP-dependent manner. This is Elongation factor 4 from Caulobacter vibrioides (strain ATCC 19089 / CIP 103742 / CB 15) (Caulobacter crescentus).